Consider the following 78-residue polypeptide: MTLNEAIKDKTYEIVEIANCDEALKKRFLSFGIHEGVQCTLLHSSMKKATLSIKINRIQVALRSHEAQYLIIKESAQE.

It belongs to the FeoA family.

Functionally, might be involved in Fe(2+) ion uptake. This Helicobacter pylori (strain J99 / ATCC 700824) (Campylobacter pylori J99) protein is Putative Fe(2+) transport protein A.